The following is a 485-amino-acid chain: Glutamyl-tRNA(Gln) amidotransferase subunit A (485 aa).

Catalysis depends on charge relay system residues Lys-79 and Ser-154. The active-site Acyl-ester intermediate is the Ser-178.

The protein belongs to the amidase family. GatA subfamily. In terms of assembly, heterotrimer of A, B and C subunits.

The catalysed reaction is L-glutamyl-tRNA(Gln) + L-glutamine + ATP + H2O = L-glutaminyl-tRNA(Gln) + L-glutamate + ADP + phosphate + H(+). Allows the formation of correctly charged Gln-tRNA(Gln) through the transamidation of misacylated Glu-tRNA(Gln) in organisms which lack glutaminyl-tRNA synthetase. The reaction takes place in the presence of glutamine and ATP through an activated gamma-phospho-Glu-tRNA(Gln). The protein is Glutamyl-tRNA(Gln) amidotransferase subunit A of Clostridium botulinum (strain Alaska E43 / Type E3).